The sequence spans 526 residues: Catalase (526 aa).

Residues 1 to 22 (MADDREKSTDQMKLWKEGRGSQ) show a composition bias toward basic and acidic residues. Residues 1–29 (MADDREKSTDQMKLWKEGRGSQRPDVLTT) form a disordered region. Residues His75 and Asn148 contribute to the active site. Residues His194, Ser201, Arg203, Asn213, Lys237, Trp303, His305, and Lys306 each contribute to the NADP(+) site. Tyr358 serves as a coordination point for heme.

It belongs to the catalase family. Homotetramer. Heme is required as a cofactor. NADP(+) serves as cofactor.

It localises to the peroxisome matrix. The catalysed reaction is 2 H2O2 = O2 + 2 H2O. Functionally, catalyzes the degradation of hydrogen peroxide (H(2)O(2)) generated by peroxisomal oxidases to water and oxygen, thereby protecting cells from the toxic effects of hydrogen peroxide. The chain is Catalase (cat) from Danio rerio (Zebrafish).